A 235-amino-acid chain; its full sequence is Claudin-16 (235 aa).

Residues M1 to D3 are Cytoplasmic-facing. The helical transmembrane segment at L4–T24 threads the bilayer. Over W25 to R79 the chain is Extracellular. A helical membrane pass occupies residues A80–L100. Residues D101–R115 are Cytoplasmic-facing. The helical transmembrane segment at I116 to V136 threads the bilayer. Topologically, residues W137–G169 are extracellular. The helical transmembrane segment at M170–F190 threads the bilayer. The Cytoplasmic segment spans residues K191–V235. Residues T233–V235 carry the Interaction with TJP1 motif.

It belongs to the claudin family. In terms of assembly, can form heteropolymeric tight junction strands with other claudins. Interacts with CLDN19. Interacts (via PDZ-binding motif TRV) with TJP1 (via PDZ domain). Cannot form tight junction strands on its own. As to expression, kidney-specific, including the thick ascending limb of Henle (TAL).

The protein resides in the cell junction. It is found in the tight junction. It localises to the cell membrane. It carries out the reaction Mg(2+)(in) = Mg(2+)(out). It catalyses the reaction Ca(2+)(in) = Ca(2+)(out). The catalysed reaction is Na(+)(in) = Na(+)(out). The enzyme catalyses K(+)(in) = K(+)(out). It carries out the reaction Rb(+)(in) = Rb(+)(out). It catalyses the reaction Cs(+)(in) = Cs(+)(out). The catalysed reaction is Li(+)(in) = Li(+)(out). Its function is as follows. Forms paracellular channels: coassembles with CLDN19 into tight junction strands with cation-selective channels through the strands, conveying epithelial permeability in a process known as paracellular tight junction permeability. Involved in the maintenance of ion gradients along the nephron. In the thick ascending limb (TAL) of Henle's loop, facilitates sodium paracellular permeability from the interstitial compartment to the lumen, contributing to the lumen-positive transepithelial potential that drives paracellular magnesium and calcium reabsorption. The chain is Claudin-16 from Homo sapiens (Human).